The sequence spans 598 residues: MASLRRVKVLLVLNLIAVAGFVLFLAKCRPIAVRSGDAFHEIRPRAEVANLSAHSASPIQDAVLKRLSLLEDIVYRQLNGLSKSLGLIEGYGGRGKGGLPATLSPAEEEKAKGPHEKYGYNSYLSEKISLDRSIPDYRPTKCKELKYSKDLPQISIIFIFVNEALSVILRSVHSAVNHTPTHLLKEIILVDDNSDEEELKVPLEEYVHKRYPGLVKVVRNQKREGLIRARIEGWKVATGQVTGFFDAHVEFTAGWAEPVLSRIQENRKRVILPSIDNIKQDNFEVQRYENSAHGYSWELWCMYISPPKDWWDAGDPSLPIRTPAMIGCSFVVNRKFFGEIGLLDPGMDVYGGENIELGIKVWLCGGSMEVLPCSRVAHIERKKKPYNSNIGFYTKRNALRVAEVWMDDYKSHVYIAWNLPLENPGIDIGDVSERRALRKSLKCKNFQWYLDHVYPEMRRYNNTVAYGELRNNKAKDVCLDQGPLENHTAILYPCHGWGPQLARYTKEGFLHLGALGTTTLLPDTRCLVDNSKSRLPQLLDCDKVKSSLYKRWNFIQNGAIMNKGTGRCLEVENRGLAGIDLILRSCTGQRWTIKNSIK.

Topologically, residues 1–6 (MASLRR) are cytoplasmic. The chain crosses the membrane as a helical; Signal-anchor for type II membrane protein span at residues 7–27 (VKVLLVLNLIAVAGFVLFLAK). Over 28–598 (CRPIAVRSGD…QRWTIKNSIK (571 aa)) the chain is Lumenal. Asn50 carries an N-linked (GlcNAc...) asparagine glycan. Disulfide bonds link Cys142–Cys373 and Cys364–Cys443. A catalytic subdomain A region spans residues 151 to 262 (LPQISIIFIF…AGWAEPVLSR (112 aa)). Substrate is bound by residues Asp192 and Arg223. 3 residues coordinate Mn(2+): Asp246, His248, and His378. The tract at residues 319 to 381 (PIRTPAMIGC…PCSRVAHIER (63 aa)) is catalytic subdomain B. Substrate-binding residues include Arg381 and Tyr386. N-linked (GlcNAc...) asparagine glycans are attached at residues Asn461 and Asn486. Positions 465–594 (AYGELRNNKA…SCTGQRWTIK (130 aa)) constitute a Ricin B-type lectin domain. Cystine bridges form between Cys478–Cys494, Cys526–Cys541, and Cys568–Cys586.

The protein belongs to the glycosyltransferase 2 family. GalNAc-T subfamily. Mn(2+) is required as a cofactor. Highly expressed in brain and heart. Weakly expressed in kidney, liver, lung and spleen.

The protein localises to the golgi apparatus membrane. It catalyses the reaction L-seryl-[protein] + UDP-N-acetyl-alpha-D-galactosamine = a 3-O-[N-acetyl-alpha-D-galactosaminyl]-L-seryl-[protein] + UDP + H(+). The enzyme catalyses L-threonyl-[protein] + UDP-N-acetyl-alpha-D-galactosamine = a 3-O-[N-acetyl-alpha-D-galactosaminyl]-L-threonyl-[protein] + UDP + H(+). Its pathway is protein modification; protein glycosylation. Its function is as follows. May catalyze the initial reaction in O-linked oligosaccharide biosynthesis, the transfer of an N-acetyl-D-galactosamine residue to a serine or threonine residue on the protein receptor. This Homo sapiens (Human) protein is Polypeptide N-acetylgalactosaminyltransferase 17.